The sequence spans 445 residues: UDP-N-acetylmuramoylalanine--D-glutamate ligase (445 aa).

117 to 123 contributes to the ATP binding site; that stretch reads GSNGKTT.

Belongs to the MurCDEF family.

It is found in the cytoplasm. The catalysed reaction is UDP-N-acetyl-alpha-D-muramoyl-L-alanine + D-glutamate + ATP = UDP-N-acetyl-alpha-D-muramoyl-L-alanyl-D-glutamate + ADP + phosphate + H(+). It participates in cell wall biogenesis; peptidoglycan biosynthesis. Its function is as follows. Cell wall formation. Catalyzes the addition of glutamate to the nucleotide precursor UDP-N-acetylmuramoyl-L-alanine (UMA). The sequence is that of UDP-N-acetylmuramoylalanine--D-glutamate ligase from Neisseria meningitidis serogroup A / serotype 4A (strain DSM 15465 / Z2491).